The chain runs to 863 residues: MKSSEIRQKFLDFFETHGHVVVPSSPLVPGNDPTLLFTNAGMVQFKDVFLGQDKRPYVRAVSAQRCVRAGGKHNDLENVGYTARHHTFFEMLGNFSFGDYFKRNAILFAWEFLTGPLNIPKDKLWATVYAEDDEAADIWLNEVKIAPSRLVRIATSDNFWQMGETGPCGPCSEIFYDHGPEVAGGPPGSEDADGDRYVEIWNLVFMQYNRDTSGELHPLPKPSVDTGMGLERIAAVMQQVHSNYEIDLFRCLIEAAARVTGEQDLSNNSLKVIADHIRACAFLITDGVIPGNEGRGYVLRRILRRAIRHGYRLGQKQSFFHLLVDDLVDVMGQAYPELMAAKKHVIAVIRQEEERFAETLENGMGVLEAALARESNMLPGDVVFRLYDTFGFPVDLTADIARERGGGIDLAGFEMCMAQQRDRARASGKFTMQAGLEYVGLPTEFHGYETLQHEAHILVLYKEGSHVDFIEAGDEAVVVLDQTPFYAESGGQAGDSGELLSGSGTFTVKDTQKIQAKVFGHAGMLSSGRLVTGDRVIARVNPIARINTAYNHSATHLLHAALRQILGNHVTQKGSLVDADRLRFDFSHNSAMQANEIRQVENLVNAQIRKNHEVATQLMAYDEAVKQGAMALFGEKYSDTVRVVSMGDFSTELCGGTHVQHSGDIGFFRIVAESGVAAGIRRIEALTGEAALAYTQQQEQQLQQVSDVLKAAPHEAALKLSQVLDHVRQVEKEITVLRSKLAGMQSSSLIEQAQEIKGIRVLAAALENVNVRTLRETLDNFKSRLKSCVVVLGTIEDDKVMLIAGVTNDLTAKLKAGDLINFVAQQVGGKGGGRADMAQAGGTLPDKLPQALTSVAGWVERNL.

4 residues coordinate Zn(2+): His-552, His-556, Cys-654, and His-658.

Belongs to the class-II aminoacyl-tRNA synthetase family. Requires Zn(2+) as cofactor.

The protein localises to the cytoplasm. The enzyme catalyses tRNA(Ala) + L-alanine + ATP = L-alanyl-tRNA(Ala) + AMP + diphosphate. Catalyzes the attachment of alanine to tRNA(Ala) in a two-step reaction: alanine is first activated by ATP to form Ala-AMP and then transferred to the acceptor end of tRNA(Ala). Also edits incorrectly charged Ser-tRNA(Ala) and Gly-tRNA(Ala) via its editing domain. This is Alanine--tRNA ligase from Nitrosomonas eutropha (strain DSM 101675 / C91 / Nm57).